The chain runs to 200 residues: Pyridoxal 5'-phosphate synthase subunit PdxT (200 aa).

Gly-52–Ser-54 lines the L-glutamine pocket. Cys-84 serves as the catalytic Nucleophile. L-glutamine-binding positions include Arg-116 and Ile-145–Arg-146. Residues His-181 and Glu-183 each act as charge relay system in the active site.

Belongs to the glutaminase PdxT/SNO family. As to quaternary structure, in the presence of PdxS, forms a dodecamer of heterodimers. Only shows activity in the heterodimer.

It catalyses the reaction aldehydo-D-ribose 5-phosphate + D-glyceraldehyde 3-phosphate + L-glutamine = pyridoxal 5'-phosphate + L-glutamate + phosphate + 3 H2O + H(+). The catalysed reaction is L-glutamine + H2O = L-glutamate + NH4(+). The protein operates within cofactor biosynthesis; pyridoxal 5'-phosphate biosynthesis. Its function is as follows. Catalyzes the hydrolysis of glutamine to glutamate and ammonia as part of the biosynthesis of pyridoxal 5'-phosphate. The resulting ammonia molecule is channeled to the active site of PdxS. This chain is Pyridoxal 5'-phosphate synthase subunit PdxT, found in Sulfolobus acidocaldarius (strain ATCC 33909 / DSM 639 / JCM 8929 / NBRC 15157 / NCIMB 11770).